Consider the following 123-residue polypeptide: uncharacterized protein (123 aa).

2 disordered regions span residues 1–33 and 82–123; these read MAPP…RRRK and EKAA…EDKS. Over residues 18–33 the composition is skewed to basic residues; that stretch reads KLFKRRRVLSRDRRRK.

This is an uncharacterized protein from Mus musculus (Mouse).